Consider the following 201-residue polypeptide: Probable nicotinate-nucleotide adenylyltransferase (201 aa).

The protein belongs to the NadD family.

The catalysed reaction is nicotinate beta-D-ribonucleotide + ATP + H(+) = deamido-NAD(+) + diphosphate. The protein operates within cofactor biosynthesis; NAD(+) biosynthesis; deamido-NAD(+) from nicotinate D-ribonucleotide: step 1/1. Catalyzes the reversible adenylation of nicotinate mononucleotide (NaMN) to nicotinic acid adenine dinucleotide (NaAD). The chain is Probable nicotinate-nucleotide adenylyltransferase from Clostridium botulinum (strain Langeland / NCTC 10281 / Type F).